The sequence spans 590 residues: Probable indole-3-acetic acid-amido synthetase GH3.1 (590 aa).

It belongs to the IAA-amido conjugating enzyme family.

Functionally, catalyzes the synthesis of indole-3-acetic acid (IAA)-amino acid conjugates, providing a mechanism for the plant to cope with the presence of excess auxin. The sequence is that of Probable indole-3-acetic acid-amido synthetase GH3.1 (GH3.1) from Arabidopsis thaliana (Mouse-ear cress).